A 320-amino-acid chain; its full sequence is Ribosome production factor 2 homolog (320 aa).

Residues 30–234 enclose the Brix domain; sequence RTMLFLDGRK…IRRTKIASED (205 aa). Residues 268 to 320 form a disordered region; sequence LGKQQTGSIQTRRVKALRKTPEEKKENRQRKKVALKAAAAEALASQGNNPFSS. Low complexity predominate over residues 302–311; that stretch reads LKAAAAEALA.

Belongs to the RPF2 family.

It localises to the nucleus. The protein localises to the nucleolus. Required for normal assembly of the mitotic spindle. May be involved in both centrosome-dependent and centrosome-independent spindle assembly programs. This is Ribosome production factor 2 homolog from Drosophila melanogaster (Fruit fly).